Reading from the N-terminus, the 273-residue chain is Dermonecrotic toxin LsaSicTox-alphaIB1avi (273 aa).

H5 is an active-site residue. Residues E25 and D27 each coordinate Mg(2+). Catalysis depends on H41, which acts as the Nucleophile. 2 cysteine pairs are disulfide-bonded: C45–C51 and C47–C190. Residue D85 coordinates Mg(2+).

This sequence belongs to the arthropod phospholipase D family. Class II subfamily. Mg(2+) is required as a cofactor. Expressed by the venom gland.

The protein localises to the secreted. The enzyme catalyses an N-(acyl)-sphingosylphosphocholine = an N-(acyl)-sphingosyl-1,3-cyclic phosphate + choline. The catalysed reaction is an N-(acyl)-sphingosylphosphoethanolamine = an N-(acyl)-sphingosyl-1,3-cyclic phosphate + ethanolamine. It catalyses the reaction a 1-acyl-sn-glycero-3-phosphocholine = a 1-acyl-sn-glycero-2,3-cyclic phosphate + choline. It carries out the reaction a 1-acyl-sn-glycero-3-phosphoethanolamine = a 1-acyl-sn-glycero-2,3-cyclic phosphate + ethanolamine. Functionally, dermonecrotic toxins cleave the phosphodiester linkage between the phosphate and headgroup of certain phospholipids (sphingolipid and lysolipid substrates), forming an alcohol (often choline) and a cyclic phosphate. This toxin acts on sphingomyelin (SM). It may also act on ceramide phosphoethanolamine (CPE), lysophosphatidylcholine (LPC) and lysophosphatidylethanolamine (LPE), but not on lysophosphatidylserine (LPS), and lysophosphatidylglycerol (LPG). It acts by transphosphatidylation, releasing exclusively cyclic phosphate products as second products. Induces dermonecrosis, hemolysis, increased vascular permeability, edema, inflammatory response, and platelet aggregation. The sequence is that of Dermonecrotic toxin LsaSicTox-alphaIB1avi from Loxosceles sabina (Tucson recluse spider).